A 413-amino-acid polypeptide reads, in one-letter code: Probable isoleucine--tRNA ligase, mitochondrial (413 aa).

The short motif at K298–S302 is the 'KMSKS' region element. ATP is bound at residue K301.

The protein belongs to the class-I aminoacyl-tRNA synthetase family.

Its subcellular location is the mitochondrion matrix. It catalyses the reaction tRNA(Ile) + L-isoleucine + ATP = L-isoleucyl-tRNA(Ile) + AMP + diphosphate. This chain is Probable isoleucine--tRNA ligase, mitochondrial, found in Ciona intestinalis (Transparent sea squirt).